The following is a 303-amino-acid chain: GTPase Era (303 aa).

Residues 8–176 enclose the Era-type G domain; sequence YCGFIAIVGR…ASIVRKHMPE (169 aa). Residues 16-23 are G1; it reads GRPNVGKS. 16 to 23 is a binding site for GTP; that stretch reads GRPNVGKS. The interval 42–46 is G2; it reads QTTRH. Residues 63–66 are G3; that stretch reads DTPG. GTP-binding positions include 63–67 and 125–128; these read DTPGL and NKVD. Residues 125–128 form a G4 region; the sequence is NKVD. The segment at 155–157 is G5; the sequence is ISA. One can recognise a KH type-2 domain in the interval 207–284; that stretch reads LGEELPYSVT…HLELWVKVKS (78 aa).

Belongs to the TRAFAC class TrmE-Era-EngA-EngB-Septin-like GTPase superfamily. Era GTPase family. In terms of assembly, monomer.

Its subcellular location is the cytoplasm. It is found in the cell inner membrane. Its function is as follows. An essential GTPase that binds both GDP and GTP, with rapid nucleotide exchange. Plays a role in 16S rRNA processing and 30S ribosomal subunit biogenesis and possibly also in cell cycle regulation and energy metabolism. This chain is GTPase Era, found in Yersinia enterocolitica serotype O:8 / biotype 1B (strain NCTC 13174 / 8081).